A 375-amino-acid polypeptide reads, in one-letter code: 23S rRNA (uracil(747)-C(5))-methyltransferase RlmC (375 aa).

4 residues coordinate [4Fe-4S] cluster: cysteine 3, cysteine 11, cysteine 14, and cysteine 87. 4 residues coordinate S-adenosyl-L-methionine: glutamine 212, phenylalanine 241, glutamate 262, and asparagine 307. The Nucleophile role is filled by cysteine 334.

Belongs to the class I-like SAM-binding methyltransferase superfamily. RNA M5U methyltransferase family. RlmC subfamily.

It carries out the reaction uridine(747) in 23S rRNA + S-adenosyl-L-methionine = 5-methyluridine(747) in 23S rRNA + S-adenosyl-L-homocysteine + H(+). Its function is as follows. Catalyzes the formation of 5-methyl-uridine at position 747 (m5U747) in 23S rRNA. The sequence is that of 23S rRNA (uracil(747)-C(5))-methyltransferase RlmC from Salmonella arizonae (strain ATCC BAA-731 / CDC346-86 / RSK2980).